The sequence spans 637 residues: MGKIIGIDLGTTNSCVAVLDGDKPRVIENAEGERTTASVIAYTDGETLVGQPAKRQAVTNPTNTLFAIKRLIGRRFEDEEVQRDIEIMPYKIVKADNGDAWVEAKGQKMAAPQVSAEVLKKMKKTAEDFLGEEVTGAVITVPAYFNDAQRQATKDAGRIAGLEVKRIINEPTAAALAYGLDKKGGDRTIAVYDLGGGTFDISIIEIDEVEGEKTFEVLATNGDTHLGGEDFDNRLINYLVDEFKKEQGIDLKTDPLAMQRVKEAAEKAKIELSFTSQTDVNLPYVTADATAPKHMNVKVTRAKLESLVEDLVQRSLEPLKVALADADLSVNDITDVILVGGQTRMPMVQAKVAEFFGKEARRDVNPDEAVAMGAAVQGGVLAGDVKDVLLLDVTPLSLGIETMGGVMTKLVEKNTTIPTKANQVFSTAEDNQSAVTIHVLQGERKQAMYNKSLGQFNLEGIQPAPRGMPQIEVTFDLDADGILHVSAKDKQTGKEQKITIQASGGLSDDEIEKMVQEAEANKEADKKFEELATARNQADQMIHGTRKQVEEAGDALPAEDKEKIEAAVSELEDARKGDDKEAIDAKVQALMTASQKLMEIAQQQAQAQAAQGGDEAAQSKDDDVVDAEFEEVKDDKK.

Position 198 is a phosphothreonine; by autocatalysis (threonine 198). Positions 606–616 are enriched in low complexity; sequence QAQAAQGGDEA. The segment at 606-637 is disordered; that stretch reads QAQAAQGGDEAAQSKDDDVVDAEFEEVKDDKK. Positions 623–637 are enriched in acidic residues; sequence DVVDAEFEEVKDDKK.

Belongs to the heat shock protein 70 family.

Acts as a chaperone. This is Chaperone protein DnaK (dnaK) from Vibrio proteolyticus (Aeromonas proteolytica).